The sequence spans 223 residues: N-terminal Xaa-Pro-Lys N-methyltransferase 1 (223 aa).

An N-acetylmethionine modification is found at Met1. An N-acetylthreonine; in N-terminal Xaa-Pro-Lys N-methyltransferase 1, N-terminally processed modification is found at Thr2. Residues Gly69, Arg74, 91-93, 119-120, and Gln135 each bind S-adenosyl-L-methionine; these read DVT and LQ.

It belongs to the methyltransferase superfamily. NTM1 family.

It localises to the nucleus. The enzyme catalyses N-terminal L-alanyl-L-prolyl-L-lysyl-[protein] + 3 S-adenosyl-L-methionine = N-terminal N,N,N-trimethyl-L-alanyl-L-prolyl-L-lysyl-[protein] + 3 S-adenosyl-L-homocysteine + 3 H(+). It carries out the reaction N-terminal L-seryl-L-prolyl-L-lysyl-[protein] + 3 S-adenosyl-L-methionine = N-terminal N,N,N-trimethyl-L-seryl-L-prolyl-L-lysyl-[protein] + 3 S-adenosyl-L-homocysteine + 3 H(+). It catalyses the reaction N-terminal L-prolyl-L-prolyl-L-lysyl-[protein] + 2 S-adenosyl-L-methionine = N-terminal N,N-dimethyl-L-prolyl-L-prolyl-L-lysyl-[protein] + 2 S-adenosyl-L-homocysteine + 2 H(+). Functionally, distributive alpha-N-methyltransferase that methylates the N-terminus of target proteins containing the N-terminal motif [Ala/Gly/Pro/Ser]-Pro-Lys when the initiator Met is cleaved. Specifically catalyzes mono-, di- or tri-methylation of the exposed alpha-amino group of the Ala, Gly or Ser residue in the [Ala/Gly/Ser]-Pro-Lys motif and mono- or di-methylation of Pro in the Pro-Pro-Lys motif. Some of the substrates may be primed by NTMT2-mediated monomethylation. Catalyzes the trimethylation of the N-terminal Gly in CENPA (after removal of Met-1). Responsible for the N-terminal methylation of KLHL31, MYL2, MYL3, RB1, RCC1, RPL23A and SET. Required during mitosis for normal bipolar spindle formation and chromosome segregation via its action on RCC1. The sequence is that of N-terminal Xaa-Pro-Lys N-methyltransferase 1 (NTMT1) from Ailuropoda melanoleuca (Giant panda).